We begin with the raw amino-acid sequence, 221 residues long: UPF0758 protein YicR (221 aa).

An MPN domain is found at Ala-99–Ile-221. Zn(2+) is bound by residues His-170, His-172, and Asp-183. The JAMM motif signature appears at His-170–Asp-183.

This sequence belongs to the UPF0758 family. YicR subfamily.

The protein is UPF0758 protein YicR of Salmonella agona (strain SL483).